The following is a 1291-amino-acid chain: DNA-directed RNA polymerase subunit beta' (1291 aa).

Zn(2+) is bound by residues C60, C62, C75, and C78. Residues D535, D537, and D539 each contribute to the Mg(2+) site. Positions 874, 951, 958, and 961 each coordinate Zn(2+).

It belongs to the RNA polymerase beta' chain family. As to quaternary structure, the RNAP catalytic core consists of 2 alpha, 1 beta, 1 beta' and 1 omega subunit. When a sigma factor is associated with the core the holoenzyme is formed, which can initiate transcription. Mg(2+) is required as a cofactor. Zn(2+) serves as cofactor.

The catalysed reaction is RNA(n) + a ribonucleoside 5'-triphosphate = RNA(n+1) + diphosphate. In terms of biological role, DNA-dependent RNA polymerase catalyzes the transcription of DNA into RNA using the four ribonucleoside triphosphates as substrates. The polypeptide is DNA-directed RNA polymerase subunit beta' (Leifsonia xyli subsp. xyli (strain CTCB07)).